The chain runs to 418 residues: Diacylglycerol O-acyltransferase 1 (418 aa).

The segment at 1-30 is disordered; sequence MSGTFNDIRRRKKEEGSPTAGITERHENKS. The Cytoplasmic segment spans residues 1-71; sequence MSGTFNDIRR…LAVAWHTSSF (71 aa). Position 17 is a phosphoserine (Ser-17). A helical membrane pass occupies residues 72–92; the sequence is VLFSIFTLFAISTPALWVLAI. Topologically, residues 93–186 are lumenal; sequence PYMIYFFFDR…DYRNQECTGP (94 aa). Asn-173 is a glycosylation site (N-linked (GlcNAc...) asparagine). Residues 187 to 207 form a helical membrane-spanning segment; the sequence is TYLFGYHPHGIGALGAFGAFA. The Cytoplasmic portion of the chain corresponds to 208–215; it reads TEGCNYSK. A helical transmembrane segment spans residues 216-236; that stretch reads IFPGIPISLMTLVTQFHIPLY. The Lumenal segment spans residues 237-289; it reads RDYLLALGISSVSRKNALRTLSKNQSICIVVGGARESLLSSTNGTQLILNKRK. N-linked (GlcNAc...) asparagine glycosylation is found at Asn-260 and Asn-279. The chain crosses the membrane as a helical span at residues 290–310; the sequence is GFIKLAIQTGNINLVPVFAFG. Over 311 to 418 the chain is Cytoplasmic; that stretch reads EVDCYNVLST…VPDAELKIVG (108 aa).

The protein belongs to the diacylglycerol acyltransferase family.

It is found in the lipid droplet. Its subcellular location is the endoplasmic reticulum membrane. The catalysed reaction is an acyl-CoA + a 1,2-diacyl-sn-glycerol = a triacyl-sn-glycerol + CoA. The enzyme catalyses a 2-acylglycerol + an acyl-CoA = a 1,2-diacylglycerol + CoA. It catalyses the reaction 2-(9Z-octadecenoyl)-glycerol + (9Z)-octadecenoyl-CoA = 1,2-di-(9Z-octadecenoyl)-glycerol + CoA. It participates in glycerolipid metabolism; triacylglycerol biosynthesis. Its function is as follows. Catalyzes the terminal and only committed step in triacylglycerol (TAG) synthesis by using diacylglycerol (DAG) and fatty acyl-CoA as substrates. Required for storage lipid synthesis. Major DAG esterifying enzyme in stationary phase when TAG production is particularly active. Involved in lipid particle synthesis from the endoplasmic reticulum, promoting localized TAG production at discrete ER subdomains, and in ergosterol biosynthesis. Also has monoacylglycerol acyltransferase (MGAT) activity, catalyzing the acyl-CoA-dependent esterification of monoacylglycerol to diacylglycerol. Can also utilize ceramide instead of DAG, acylating the ceramides by attaching a fatty acid to the hydroxy group on the first carbon atom of the long-chain base to produce 1-O-acylceramides. The chain is Diacylglycerol O-acyltransferase 1 (DGA1) from Saccharomyces cerevisiae (strain ATCC 204508 / S288c) (Baker's yeast).